We begin with the raw amino-acid sequence, 192 residues long: MNKRDYMNTSVQEPPLDYSFRSIHVIQDLVNEEPRTGLRPLKRSKSGKSLTQSLWLNNNVLNDLRDFNQVASQLLEHPENLAWIDLSFNDLTSIDPVLTTFFNLSVLYLHGNSIQHLGEVNKLAVLPRLRSLTLHGNPMEEEKGYRQYVLCTLPHITTFDFSGVTKADRTTAEVWKRMNIKPKKARIKQNTL.

LRR repeat units follow at residues 49–71 (SLTQSLWLNNNVLNDLRDFNQVA), 80–101 (NLAWIDLSFNDLTSIDPVLTTF), and 103–124 (NLSVLYLHGNSIQHLGEVNKLA). In terms of domain architecture, LRRCT spans 137–175 (NPMEEEKGYRQYVLCTLPHITTFDFSGVTKADRTTAEVW).

Its subcellular location is the cytoplasm. The chain is Leucine-rich repeat-containing protein 51 from Macaca mulatta (Rhesus macaque).